We begin with the raw amino-acid sequence, 645 residues long: Sister chromatid cohesion protein 1 (645 aa).

3 disordered regions span residues 292-311 (FEPE…FALE), 495-527 (QSGF…GQLE), and 619-645 (CPLS…MRPV).

It belongs to the rad21 family. As to quaternary structure, component of the cohesin complex, composed of the smc-1 and smc-3 heterodimer attached via their hinge domain, scc-1 which links them, and scc-3. Interacts with smc-1, smc-3, scc-3 and tim-1.

It is found in the nucleus. Its subcellular location is the chromosome. The protein localises to the cytoplasm. Its function is as follows. Cleavable component of the cohesin complex involved in chromosome cohesion during cell cycle. The cohesin complex is required for the cohesion of sister chromatids after DNA replication. The cohesin complex apparently forms a large proteinaceous ring within which sister chromatids can be trapped. At metaphase-anaphase transition, this protein is cleaved and dissociates from chromatin, allowing sister chromatids to segregate. This Caenorhabditis elegans protein is Sister chromatid cohesion protein 1.